The sequence spans 574 residues: Meiotically up-regulated gene 72 protein (574 aa).

The tract at residues 339–374 (VRAGTPQSSPNFNPAMRRSPVGAASRSPSRSTIGIS) is disordered. The residue at position 343 (threonine 343) is a Phosphothreonine. The span at 364–374 (RSPSRSTIGIS) shows a compositional bias: polar residues. Residue serine 392 is modified to Phosphoserine. 2 disordered regions span residues 422–451 (TSPS…NKAG) and 495–574 (RNRR…RRMD). A compositionally biased stretch (polar residues) spans 541–554 (LYDTSRYPTRNSKP).

It is found in the cytoplasm. Functionally, has a role in meiosis. This is Meiotically up-regulated gene 72 protein (mug72) from Schizosaccharomyces pombe (strain 972 / ATCC 24843) (Fission yeast).